Here is an 835-residue protein sequence, read N- to C-terminus: Telomere length regulation protein TEL2 homolog (835 aa).

Disordered regions lie at residues 455–501 (SADC…LAPY) and 629–648 (LSHE…HSIR). A compositionally biased stretch (low complexity) spans 464-473 (ESSPSKSCPK). Residues 474–486 (AIEKSKMEAKADQ) show a composition bias toward basic and acidic residues. Positions 488–499 (SDSELDSDDDLA) are enriched in acidic residues. A compositionally biased stretch (polar residues) spans 636–648 (ESRSTGTGQHSIR).

The protein belongs to the TEL2 family.

Its subcellular location is the cytoplasm. The protein resides in the membrane. It localises to the nucleus. The protein localises to the chromosome. It is found in the telomere. In terms of biological role, regulator of the DNA damage response (DDR). Part of the TTT complex that is required to stabilize protein levels of the phosphatidylinositol 3-kinase-related protein kinase (PIKK) family proteins. Promotes assembly, stabilizes and maintains the activity of TORC complexes, which regulate cell growth and survival in response to nutrient and hormonal signals. May be involved in telomere length regulation. The sequence is that of Telomere length regulation protein TEL2 homolog (telo2) from Xenopus laevis (African clawed frog).